Reading from the N-terminus, the 225-residue chain is 3-dehydroquinate dehydratase (225 aa).

3-dehydroquinate is bound by residues S6, E30–R32, and R62. Residue H118 is the Proton donor/acceptor of the active site. The Schiff-base intermediate with substrate role is filled by K143. Positions 186, 205, and 209 each coordinate 3-dehydroquinate.

This sequence belongs to the type-I 3-dehydroquinase family. As to quaternary structure, homodimer.

It carries out the reaction 3-dehydroquinate = 3-dehydroshikimate + H2O. It functions in the pathway metabolic intermediate biosynthesis; chorismate biosynthesis; chorismate from D-erythrose 4-phosphate and phosphoenolpyruvate: step 3/7. Involved in the third step of the chorismate pathway, which leads to the biosynthesis of aromatic amino acids. Catalyzes the cis-dehydration of 3-dehydroquinate (DHQ) and introduces the first double bond of the aromatic ring to yield 3-dehydroshikimate. This is 3-dehydroquinate dehydratase from Streptococcus pneumoniae (strain Hungary19A-6).